Reading from the N-terminus, the 1397-residue chain is DNA-directed RNA polymerase subunit beta (1397 aa).

It belongs to the RNA polymerase beta chain family. As to quaternary structure, the RNAP catalytic core consists of 2 alpha, 1 beta, 1 beta' and 1 omega subunit. When a sigma factor is associated with the core the holoenzyme is formed, which can initiate transcription.

It carries out the reaction RNA(n) + a ribonucleoside 5'-triphosphate = RNA(n+1) + diphosphate. DNA-dependent RNA polymerase catalyzes the transcription of DNA into RNA using the four ribonucleoside triphosphates as substrates. The protein is DNA-directed RNA polymerase subunit beta of Rhodospirillum centenum (strain ATCC 51521 / SW).